The following is a 338-amino-acid chain: Homoserine kinase (338 aa).

The protein belongs to the GHMP kinase family. Homoserine kinase subfamily.

The enzyme catalyses L-homoserine + ATP = O-phospho-L-homoserine + ADP + H(+). Its pathway is amino-acid biosynthesis; L-threonine biosynthesis; L-threonine from L-aspartate: step 4/5. In terms of biological role, commits homoserine to the threonine biosynthesis pathway by catalyzing its O-phosphorylation. This is Homoserine kinase from Schizosaccharomyces pombe (strain 972 / ATCC 24843) (Fission yeast).